Reading from the N-terminus, the 688-residue chain is Polyribonucleotide nucleotidyltransferase (688 aa).

The Mg(2+) site is built by Asp484 and Asp490. The region spanning 550–609 (PTTEIFNVAPDKIVEIIGQGGRVIREIVEKFEVKIDLNKPSGEVKIMGNKERVLKTKEFI) is the KH domain. Residues 626–688 (DEVLEAQVKR…NKGKIALDLA (63 aa)) form the S1 motif domain.

The protein belongs to the polyribonucleotide nucleotidyltransferase family. It depends on Mg(2+) as a cofactor.

It localises to the cytoplasm. It catalyses the reaction RNA(n+1) + phosphate = RNA(n) + a ribonucleoside 5'-diphosphate. Involved in mRNA degradation. Catalyzes the phosphorolysis of single-stranded polyribonucleotides processively in the 3'- to 5'-direction. The polypeptide is Polyribonucleotide nucleotidyltransferase (Helicobacter pylori (strain Shi470)).